A 340-amino-acid chain; its full sequence is Flap endonuclease 1 (340 aa).

The segment at methionine 1–arginine 98 is N-domain. Positions 27, 80, 152, 154, 173, 175, and 236 each coordinate Mg(2+). The segment at glutamate 116 to lysine 258 is I-domain. Positions lysine 330–phenylalanine 338 are interaction with PCNA.

Belongs to the XPG/RAD2 endonuclease family. FEN1 subfamily. As to quaternary structure, interacts with PCNA. PCNA stimulates the nuclease activity without altering cleavage specificity. Requires Mg(2+) as cofactor.

In terms of biological role, structure-specific nuclease with 5'-flap endonuclease and 5'-3' exonuclease activities involved in DNA replication and repair. During DNA replication, cleaves the 5'-overhanging flap structure that is generated by displacement synthesis when DNA polymerase encounters the 5'-end of a downstream Okazaki fragment. Binds the unpaired 3'-DNA end and kinks the DNA to facilitate 5' cleavage specificity. Cleaves one nucleotide into the double-stranded DNA from the junction in flap DNA, leaving a nick for ligation. Also involved in the base excision repair (BER) pathway. Acts as a genome stabilization factor that prevents flaps from equilibrating into structures that lead to duplications and deletions. Also possesses 5'-3' exonuclease activity on nicked or gapped double-stranded DNA. This is Flap endonuclease 1 from Pyrococcus furiosus (strain ATCC 43587 / DSM 3638 / JCM 8422 / Vc1).